Here is a 599-residue protein sequence, read N- to C-terminus: Histone-arginine methyltransferase CARMER (599 aa).

The 308-residue stretch at 127-434 (ASQYFQFYGY…QRQSYDVEID (308 aa)) folds into the SAM-dependent MTase PRMT-type domain. S-adenosyl-L-methionine contacts are provided by Gln-140, Arg-149, Gly-173, Glu-195, Glu-224, and Thr-252. Position 487 is an asymmetric dimethylarginine; by autocatalysis (Arg-487).

It belongs to the class I-like SAM-binding methyltransferase superfamily. Protein arginine N-methyltransferase family. Homodimer. Post-translationally, the dimethylated protein is the major form.

The protein resides in the cytoplasm. It is found in the nucleus. It catalyses the reaction L-arginyl-[protein] + 2 S-adenosyl-L-methionine = N(omega),N(omega)-dimethyl-L-arginyl-[protein] + 2 S-adenosyl-L-homocysteine + 2 H(+). In terms of biological role, methylates (mono- and asymmetric dimethylation) the guanidino nitrogens of arginyl residues in proteins. May methylate histone H3 at 'Arg-17' and activate transcription via chromatin remodeling. The sequence is that of Histone-arginine methyltransferase CARMER (Art4) from Culex quinquefasciatus (Southern house mosquito).